A 274-amino-acid chain; its full sequence is MEIRKRILADMQVAETIDAHEEIRKSVEFLKAYLKKNTFLKSFVLGISGGQDSTLTGKLAQLAISEMRDETGDNEYQFFAVSLPYGTQLDESDRQDALNFMNPDNRLTVNIKASVDASVAALAEAGVELSDFAKGNEKARERMKVQYAIAAMHKGVVVGTDHSAEAVTGFYTKYGDGGTDINPLFRLNKRQGKALLKELGCPEHLYLKKPTADLEDNKPALPDEVALGVTYDQIDDYLEGKEVPADAAAKIENWFIKTEHKRHMAITIFDDFWK.

46–53 (GISGGQDS) contributes to the ATP binding site. Mg(2+) is bound at residue aspartate 52. Arginine 140 serves as a coordination point for deamido-NAD(+). Threonine 160 contributes to the ATP binding site. Glutamate 165 provides a ligand contact to Mg(2+). Residues lysine 173 and aspartate 180 each coordinate deamido-NAD(+). ATP is bound by residues lysine 189 and threonine 211. Residue 260-261 (HK) coordinates deamido-NAD(+).

This sequence belongs to the NAD synthetase family. As to quaternary structure, homodimer.

It catalyses the reaction deamido-NAD(+) + NH4(+) + ATP = AMP + diphosphate + NAD(+) + H(+). The protein operates within cofactor biosynthesis; NAD(+) biosynthesis; NAD(+) from deamido-NAD(+) (ammonia route): step 1/1. Catalyzes the ATP-dependent amidation of deamido-NAD to form NAD. Uses ammonia as a nitrogen source. The chain is NH(3)-dependent NAD(+) synthetase from Listeria welshimeri serovar 6b (strain ATCC 35897 / DSM 20650 / CCUG 15529 / CIP 8149 / NCTC 11857 / SLCC 5334 / V8).